Consider the following 173-residue polypeptide: Crossover junction endodeoxyribonuclease RuvC (173 aa).

Catalysis depends on residues aspartate 8, glutamate 67, and aspartate 139. Mg(2+)-binding residues include aspartate 8, glutamate 67, and aspartate 139.

Belongs to the RuvC family. Homodimer which binds Holliday junction (HJ) DNA. The HJ becomes 2-fold symmetrical on binding to RuvC with unstacked arms; it has a different conformation from HJ DNA in complex with RuvA. In the full resolvosome a probable DNA-RuvA(4)-RuvB(12)-RuvC(2) complex forms which resolves the HJ. Mg(2+) serves as cofactor.

It localises to the cytoplasm. It catalyses the reaction Endonucleolytic cleavage at a junction such as a reciprocal single-stranded crossover between two homologous DNA duplexes (Holliday junction).. In terms of biological role, the RuvA-RuvB-RuvC complex processes Holliday junction (HJ) DNA during genetic recombination and DNA repair. Endonuclease that resolves HJ intermediates. Cleaves cruciform DNA by making single-stranded nicks across the HJ at symmetrical positions within the homologous arms, yielding a 5'-phosphate and a 3'-hydroxyl group; requires a central core of homology in the junction. The consensus cleavage sequence is 5'-(A/T)TT(C/G)-3'. Cleavage occurs on the 3'-side of the TT dinucleotide at the point of strand exchange. HJ branch migration catalyzed by RuvA-RuvB allows RuvC to scan DNA until it finds its consensus sequence, where it cleaves and resolves the cruciform DNA. The sequence is that of Crossover junction endodeoxyribonuclease RuvC from Shewanella pealeana (strain ATCC 700345 / ANG-SQ1).